The primary structure comprises 196 residues: Probable malonic semialdehyde reductase RutE (196 aa).

The protein belongs to the nitroreductase family. HadB/RutE subfamily. The cofactor is FMN.

The catalysed reaction is 3-hydroxypropanoate + NADP(+) = 3-oxopropanoate + NADPH + H(+). Its function is as follows. May reduce toxic product malonic semialdehyde to 3-hydroxypropionic acid, which is excreted. The polypeptide is Probable malonic semialdehyde reductase RutE (Escherichia coli O45:K1 (strain S88 / ExPEC)).